A 341-amino-acid chain; its full sequence is Heat-inducible transcription repressor HrcA (341 aa).

Belongs to the HrcA family.

Negative regulator of class I heat shock genes (grpE-dnaK-dnaJ and groELS operons). Prevents heat-shock induction of these operons. In Symbiobacterium thermophilum (strain DSM 24528 / JCM 14929 / IAM 14863 / T), this protein is Heat-inducible transcription repressor HrcA.